The primary structure comprises 468 residues: ATP synthase subunit beta (468 aa).

ATP is bound at residue 148 to 155 (GGAGVGKT).

The protein belongs to the ATPase alpha/beta chains family. In terms of assembly, F-type ATPases have 2 components, CF(1) - the catalytic core - and CF(0) - the membrane proton channel. CF(1) has five subunits: alpha(3), beta(3), gamma(1), delta(1), epsilon(1). CF(0) has three main subunits: a(1), b(2) and c(9-12). The alpha and beta chains form an alternating ring which encloses part of the gamma chain. CF(1) is attached to CF(0) by a central stalk formed by the gamma and epsilon chains, while a peripheral stalk is formed by the delta and b chains.

Its subcellular location is the cell membrane. The catalysed reaction is ATP + H2O + 4 H(+)(in) = ADP + phosphate + 5 H(+)(out). In terms of biological role, produces ATP from ADP in the presence of a proton gradient across the membrane. The catalytic sites are hosted primarily by the beta subunits. The polypeptide is ATP synthase subunit beta (Stenotrophomonas maltophilia (strain K279a)).